The chain runs to 474 residues: ATP synthase subunit beta (474 aa).

153 to 160 (GGAGVGKT) is an ATP binding site.

The protein belongs to the ATPase alpha/beta chains family. In terms of assembly, F-type ATPases have 2 components, CF(1) - the catalytic core - and CF(0) - the membrane proton channel. CF(1) has five subunits: alpha(3), beta(3), gamma(1), delta(1), epsilon(1). CF(0) has three main subunits: a(1), b(2) and c(9-12). The alpha and beta chains form an alternating ring which encloses part of the gamma chain. CF(1) is attached to CF(0) by a central stalk formed by the gamma and epsilon chains, while a peripheral stalk is formed by the delta and b chains.

Its subcellular location is the cell inner membrane. It carries out the reaction ATP + H2O + 4 H(+)(in) = ADP + phosphate + 5 H(+)(out). Its function is as follows. Produces ATP from ADP in the presence of a proton gradient across the membrane. The catalytic sites are hosted primarily by the beta subunits. This chain is ATP synthase subunit beta, found in Neorickettsia sennetsu (strain ATCC VR-367 / Miyayama) (Ehrlichia sennetsu).